The primary structure comprises 182 residues: UPF0316 protein Sde_0566 (182 aa).

3 helical membrane passes run 7–27 (VAPE…VSLG), 41–61 (LAAF…GQVF), and 67–87 (WYLA…GMWI).

Belongs to the UPF0316 family.

The protein resides in the cell membrane. The polypeptide is UPF0316 protein Sde_0566 (Saccharophagus degradans (strain 2-40 / ATCC 43961 / DSM 17024)).